A 500-amino-acid chain; its full sequence is Beta-glucosidase 28 (500 aa).

An N-terminal signal peptide occupies residues 1-24 (MDRRLLLSALLFIALACSSNRVHG). Q45 is a binding site for a beta-D-glucoside. A glycan (N-linked (GlcNAc...) asparagine) is linked at N111. Residues H146 and 191–192 (NE) contribute to the a beta-D-glucoside site. The active-site Proton donor is the E192. Residues C211 and C219 are joined by a disulfide bond. A beta-D-glucoside is bound at residue Y337. N362 is a glycosylation site (N-linked (GlcNAc...) asparagine). E408 is a binding site for a beta-D-glucoside. E408 functions as the Nucleophile in the catalytic mechanism. 3 N-linked (GlcNAc...) asparagine glycosylation sites follow: N409, N415, and N416. Residues W457, 464-465 (EF), and F473 each bind a beta-D-glucoside.

It belongs to the glycosyl hydrolase 1 family.

It carries out the reaction Hydrolysis of terminal, non-reducing beta-D-glucosyl residues with release of beta-D-glucose.. In Oryza sativa subsp. japonica (Rice), this protein is Beta-glucosidase 28 (BGLU28).